A 114-amino-acid polypeptide reads, in one-letter code: Histone H2B (114 aa).

A disordered region spans residues 1-22; sequence MAKTPSKKAAKAPKKAGSKRNK. Position 3 is an N6-acetyllysine (K3). Residue K110 forms a Glycyl lysine isopeptide (Lys-Gly) (interchain with G-Cter in ubiquitin) linkage.

This sequence belongs to the histone H2B family. The nucleosome is a histone octamer containing two molecules each of H2A, H2B, H3 and H4 assembled in one H3-H4 heterotetramer and two H2A-H2B heterodimers. The octamer wraps approximately 147 bp of DNA. In terms of processing, monoubiquitination of Lys-110 gives a specific tag for epigenetic transcriptional activation and is also prerequisite for histone H3 'Lys-4' and 'Lys-79' methylation.

It localises to the nucleus. The protein localises to the chromosome. In terms of biological role, core component of nucleosome. Nucleosomes wrap and compact DNA into chromatin, limiting DNA accessibility to the cellular machineries which require DNA as a template. Histones thereby play a central role in transcription regulation, DNA repair, DNA replication and chromosomal stability. DNA accessibility is regulated via a complex set of post-translational modifications of histones, also called histone code, and nucleosome remodeling. The chain is Histone H2B from Olisthodiscus luteus (Marine phytoflagellate).